The sequence spans 155 residues: SsrA-binding protein (155 aa).

This sequence belongs to the SmpB family.

It is found in the cytoplasm. In terms of biological role, required for rescue of stalled ribosomes mediated by trans-translation. Binds to transfer-messenger RNA (tmRNA), required for stable association of tmRNA with ribosomes. tmRNA and SmpB together mimic tRNA shape, replacing the anticodon stem-loop with SmpB. tmRNA is encoded by the ssrA gene; the 2 termini fold to resemble tRNA(Ala) and it encodes a 'tag peptide', a short internal open reading frame. During trans-translation Ala-aminoacylated tmRNA acts like a tRNA, entering the A-site of stalled ribosomes, displacing the stalled mRNA. The ribosome then switches to translate the ORF on the tmRNA; the nascent peptide is terminated with the 'tag peptide' encoded by the tmRNA and targeted for degradation. The ribosome is freed to recommence translation, which seems to be the essential function of trans-translation. This is SsrA-binding protein from Streptococcus uberis (strain ATCC BAA-854 / 0140J).